The following is a 459-amino-acid chain: Probable PTS system sucrose-specific EIIBC component (459 aa).

Residues 1 to 86 form the PTS EIIB type-1 domain; the sequence is MHKEIAKELL…VHVWETAPSE (86 aa). Cys25 (phosphocysteine intermediate; for EIIB activity) is an active-site residue. Residues 106 to 459 enclose the PTS EIIC type-1 domain; sequence KTLSDIFVPI…LFLGFKEETE (354 aa). 11 consecutive transmembrane segments (helical) span residues 111–131, 147–167, 177–197, 209–229, 245–265, 288–308, 329–349, 360–380, 388–408, 412–432, and 434–454; these read IFVP…LIGM, MLDL…GFSA, LGAV…SMLG, LHIP…SVFV, LDVV…ALIV, AGIA…LSGL, FLVP…LAVF, IALP…VFGV, FIGA…VQVV, YGLT…ANFV, and YMIG…FLGF.

The protein resides in the cell membrane. Its function is as follows. The phosphoenolpyruvate-dependent sugar phosphotransferase system (sugar PTS), a major carbohydrate active -transport system, catalyzes the phosphorylation of incoming sugar substrates concomitantly with their translocation across the cell membrane. This system may be involved in sucrose transport. The EIIB domain is mainly phosphorylated by the EIIA domains of GamP and PtsA/YpqE. Functionally, negatively regulates SacY activity by catalyzing its phosphorylation on 'His-99'. The chain is Probable PTS system sucrose-specific EIIBC component (sacX) from Bacillus subtilis (strain 168).